Reading from the N-terminus, the 585-residue chain is Arginine--tRNA ligase (585 aa).

The 'HIGH' region motif lies at 131 to 141 (ANPTGPMHVGH).

This sequence belongs to the class-I aminoacyl-tRNA synthetase family. As to quaternary structure, monomer.

The protein localises to the cytoplasm. The enzyme catalyses tRNA(Arg) + L-arginine + ATP = L-arginyl-tRNA(Arg) + AMP + diphosphate. The polypeptide is Arginine--tRNA ligase (Brucella abortus (strain S19)).